A 124-amino-acid polypeptide reads, in one-letter code: MAIAKEDILAAVEGMTVLELNELVKAFEEKFGVSAAAVAVAGPAGGGAAAAAEEQTEFTVMLLEAGGNKVAVIKAVRELTGLGLKEAKDLVDGAPKPVKEAVPKAAADEAKKKLEDAGAKAEIK.

This sequence belongs to the bacterial ribosomal protein bL12 family. As to quaternary structure, homodimer. Part of the ribosomal stalk of the 50S ribosomal subunit. Forms a multimeric L10(L12)X complex, where L10 forms an elongated spine to which 2 to 4 L12 dimers bind in a sequential fashion. Binds GTP-bound translation factors.

In terms of biological role, forms part of the ribosomal stalk which helps the ribosome interact with GTP-bound translation factors. Is thus essential for accurate translation. The sequence is that of Large ribosomal subunit protein bL12 from Burkholderia lata (strain ATCC 17760 / DSM 23089 / LMG 22485 / NCIMB 9086 / R18194 / 383).